The following is a 145-amino-acid chain: Ribosomal RNA large subunit methyltransferase H (145 aa).

S-adenosyl-L-methionine contacts are provided by residues Leu64, Gly93, and 112–117; that span reads LSPLTF.

This sequence belongs to the RNA methyltransferase RlmH family. Homodimer.

It localises to the cytoplasm. The enzyme catalyses pseudouridine(1915) in 23S rRNA + S-adenosyl-L-methionine = N(3)-methylpseudouridine(1915) in 23S rRNA + S-adenosyl-L-homocysteine + H(+). Functionally, specifically methylates the pseudouridine at position 1915 (m3Psi1915) in 23S rRNA. The polypeptide is Ribosomal RNA large subunit methyltransferase H (Prochlorococcus marinus (strain MIT 9211)).